Consider the following 765-residue polypeptide: Transcription factor RFX3 (765 aa).

The segment at residues 189–264 (HLQWLLDNYE…YHYYGIRVKP (76 aa)) is a DNA-binding region (RFX-type winged-helix).

This sequence belongs to the RFX family.

Its subcellular location is the nucleus. Functionally, transcription factor required for ciliogenesis and islet cell differentiation during endocrine pancreas development. The sequence is that of Transcription factor RFX3 (rfx3) from Danio rerio (Zebrafish).